The sequence spans 112 residues: MVAAKKTKKTHESINSRLALVMKSGKFTLGYKTVLESLRSNKGKLIIIANNCPPLRKSEIEYYAMLAKVGVHHYNGNNVDLGTACGKYFRVCCLSIIDAGDSDIIKSIPGDH.

This sequence belongs to the eukaryotic ribosomal protein eL30 family.

This is Large ribosomal subunit protein eL30 (RPL30) from Euphorbia esula (Leafy spurge).